Here is a 324-residue protein sequence, read N- to C-terminus: MMSQQDLPTLFYSGKSNSAVPIISESELQTITAEPWLEISKKGLQLEGLNFDRQGQLFLLDVFEGNIFKINPETKEIKRPFVSHKANPAAIKIHKDGRLFVCYLGDFKSTGGIFAATENGDNIQDIIEDFSTTYCIDDMVFDSKGGFYFTDFRGYSTNPLGGVYYVAPDFRTVTPIIQNISVANGIALSKDEKVLWVTETTANRLHRIALEDDGVTIQPFGATIPYYFTGHEGPDSCCIDSDDNLYVAMYGQGRVLVFNKRGYPIGQILIPGRDEGHMLRSTHPQFIPDTNQLIICSNDIEMGGGSMLYTVNGFAKGHQSFQFQ.

The Ca(2+) site is built by glutamate 47, serine 109, glycine 111, aspartate 129, threonine 132, tyrosine 134, aspartate 137, asparagine 184, aspartate 235, and serine 236. Aspartate 235 acts as the Proton donor in catalysis.

This sequence belongs to the SMP-30/CGR1 family. The cofactor is Ca(2+).

Its subcellular location is the cytoplasm. Exhibits lactonase activity. Acts in cells with perturbed membrane integrity and is possibly related to the membrane homeostasis. The sequence is that of Lactonase drp35 (drp35) from Staphylococcus aureus (strain MW2).